The chain runs to 443 residues: Methyl-coenzyme M reductase II subunit beta (443 aa).

Tyr-367 provides a ligand contact to coenzyme M. Residue Gly-369 coordinates coenzyme B.

Belongs to the methyl-coenzyme M reductase beta subunit family. MCR is a hexamer of two alpha, two beta, and two gamma chains, forming a dimer of heterotrimers. Coenzyme F430 is required as a cofactor.

It carries out the reaction coenzyme B + methyl-coenzyme M = methane + coenzyme M-coenzyme B heterodisulfide. Its pathway is one-carbon metabolism; methyl-coenzyme M reduction; methane from methyl-coenzyme M: step 1/1. In terms of biological role, component of the methyl-coenzyme M reductase (MCR) I that catalyzes the reductive cleavage of methyl-coenzyme M (CoM-S-CH3 or 2-(methylthio)ethanesulfonate) using coenzyme B (CoB or 7-mercaptoheptanoylthreonine phosphate) as reductant which results in the production of methane and the mixed heterodisulfide of CoB and CoM (CoM-S-S-CoB). This is the final step in methanogenesis. This Methanothermobacter marburgensis (strain ATCC BAA-927 / DSM 2133 / JCM 14651 / NBRC 100331 / OCM 82 / Marburg) (Methanobacterium thermoautotrophicum) protein is Methyl-coenzyme M reductase II subunit beta.